We begin with the raw amino-acid sequence, 25 residues long: Insulin mimetic protein (25 aa).

Residues 1–25 (TKDPELKQCKKQQKKQQQYDDDDKK) form a disordered region.

Glycosylated. Expressed in seed.

The sequence is that of Insulin mimetic protein from Cnidoscolus quercifolius.